Here is a 480-residue protein sequence, read N- to C-terminus: MNFETVIGLEVHVELNTNSKIFSPTSAHFGNDQNANTNVIDWSFPGVLPVLNKGVVDAGIKAALALNMDIHKKMHFDRKNYFYPDNPKAYQISQFDEPIGYNGWIEVKLEDGTTKKIGIERAHLEEDAGKNTHGTDGYSYVDLNRQGVPLIEIVSEADMRSPEEAYAYLTALKEVIQYAGISDVKMEEGSMRVDANISLRPYGQEKFGTKTELKNLNSFSNVRKGLEYEIQRQAEILRSGGQIRQETRRYDEANKTTILMRVKEGAADYRYFPEPDLPLFEISDEWIEEMRTELPEFPKERRARYVSDLGLSDYDANQLTANKVTSDFFEKAVALGGDAKQVSNWLQGEVAQFLNAEGKTLEQIELTPENLVEMITIIEDGTISSKIAKKVFVHLAKNGGGAREYVEKAGMVQISDPAILIPIIHQVFADNEAAVADFKSGKRNADKAFTGFLMKATKGQANPQVALKLLAQELAKLKEN.

The protein belongs to the GatB/GatE family. GatB subfamily. As to quaternary structure, heterotrimer of A, B and C subunits.

The enzyme catalyses L-glutamyl-tRNA(Gln) + L-glutamine + ATP + H2O = L-glutaminyl-tRNA(Gln) + L-glutamate + ADP + phosphate + H(+). It carries out the reaction L-aspartyl-tRNA(Asn) + L-glutamine + ATP + H2O = L-asparaginyl-tRNA(Asn) + L-glutamate + ADP + phosphate + 2 H(+). Its function is as follows. Allows the formation of correctly charged Asn-tRNA(Asn) or Gln-tRNA(Gln) through the transamidation of misacylated Asp-tRNA(Asn) or Glu-tRNA(Gln) in organisms which lack either or both of asparaginyl-tRNA or glutaminyl-tRNA synthetases. The reaction takes place in the presence of glutamine and ATP through an activated phospho-Asp-tRNA(Asn) or phospho-Glu-tRNA(Gln). This Streptococcus pneumoniae (strain P1031) protein is Aspartyl/glutamyl-tRNA(Asn/Gln) amidotransferase subunit B.